A 154-amino-acid chain; its full sequence is uncharacterized protein (154 aa).

S47 is modified (phosphoserine).

The protein to yeast YPL229w.

This is an uncharacterized protein from Saccharomyces cerevisiae (strain ATCC 204508 / S288c) (Baker's yeast).